The chain runs to 365 residues: Putative DNA-directed RNA polymerase subunit alpha-like 3 (365 aa).

The protein belongs to the RNA polymerase alpha chain family. In plastids the minimal PEP RNA polymerase catalytic core is composed of four subunits: alpha, beta, beta', and beta''. When a (nuclear-encoded) sigma factor is associated with the core the holoenzyme is formed, which can initiate transcription.

It is found in the plastid. It localises to the chloroplast. The catalysed reaction is RNA(n) + a ribonucleoside 5'-triphosphate = RNA(n+1) + diphosphate. Its function is as follows. DNA-dependent RNA polymerase catalyzes the transcription of DNA into RNA using the four ribonucleoside triphosphates as substrates. The protein is Putative DNA-directed RNA polymerase subunit alpha-like 3 (rpoAL3-A) of Pelargonium hortorum (Common geranium).